Here is a 470-residue protein sequence, read N- to C-terminus: Neuraminidase (470 aa).

Over 1–6 the chain is Intravirion; the sequence is MNPNQK. The helical transmembrane segment at 7–27 threads the bilayer; sequence IITIGSISIAIGIISLMLQIG. The interval 11-33 is involved in apical transport and lipid raft association; the sequence is GSISIAIGIISLMLQIGNIISIW. Residues 28 to 470 lie on the Virion surface side of the membrane; it reads NIISIWASHS…GAELPFTIDK (443 aa). Residues 36-90 are hypervariable stalk region; that stretch reads HSIQTGSQNHTGICNQRIITYENSTWVNHTYVNINNTNVVAGKDKTSVTLAGNSS. N-linked (GlcNAc...) asparagine; by host glycans are attached at residues Asn-44, Asn-58, Asn-63, Asn-70, and Asn-88. The segment at 91 to 470 is head of neuraminidase; it reads LCSISGWAIY…GAELPFTIDK (380 aa). 8 cysteine pairs are disulfide-bonded: Cys-92–Cys-417, Cys-124–Cys-129, Cys-184–Cys-231, Cys-233–Cys-238, Cys-279–Cys-292, Cys-281–Cys-290, Cys-318–Cys-335, and Cys-421–Cys-447. Substrate is bound at residue Arg-118. A glycan (N-linked (GlcNAc...) asparagine; by host) is linked at Asn-146. The active-site Proton donor/acceptor is the Asp-151. Arg-152 is a binding site for substrate. Residue Asn-235 is glycosylated (N-linked (GlcNAc...) asparagine; by host). A substrate-binding site is contributed by 277–278; sequence EE. Arg-293 serves as a coordination point for substrate. The Ca(2+) site is built by Asp-294, Gly-298, and Asp-324. Residue Arg-368 participates in substrate binding. Residue Asn-386 is glycosylated (N-linked (GlcNAc...) asparagine; by host). Catalysis depends on Tyr-402, which acts as the Nucleophile. N-linked (GlcNAc...) asparagine; by host glycans are attached at residues Asn-434 and Asn-455.

This sequence belongs to the glycosyl hydrolase 34 family. In terms of assembly, homotetramer. The cofactor is Ca(2+). N-glycosylated.

The protein localises to the virion membrane. Its subcellular location is the host apical cell membrane. It catalyses the reaction Hydrolysis of alpha-(2-&gt;3)-, alpha-(2-&gt;6)-, alpha-(2-&gt;8)- glycosidic linkages of terminal sialic acid residues in oligosaccharides, glycoproteins, glycolipids, colominic acid and synthetic substrates.. With respect to regulation, inhibited by the neuraminidase inhibitors zanamivir (Relenza) and oseltamivir (Tamiflu). These drugs interfere with the release of progeny virus from infected cells and are effective against all influenza strains. Resistance to neuraminidase inhibitors is quite rare. In terms of biological role, catalyzes the removal of terminal sialic acid residues from viral and cellular glycoconjugates. Cleaves off the terminal sialic acids on the glycosylated HA during virus budding to facilitate virus release. Additionally helps virus spread through the circulation by further removing sialic acids from the cell surface. These cleavages prevent self-aggregation and ensure the efficient spread of the progeny virus from cell to cell. Otherwise, infection would be limited to one round of replication. Described as a receptor-destroying enzyme because it cleaves a terminal sialic acid from the cellular receptors. May facilitate viral invasion of the upper airways by cleaving the sialic acid moieties on the mucin of the airway epithelial cells. Likely to plays a role in the budding process through its association with lipid rafts during intracellular transport. May additionally display a raft-association independent effect on budding. Plays a role in the determination of host range restriction on replication and virulence. Sialidase activity in late endosome/lysosome traffic seems to enhance virus replication. In Influenza A virus (strain A/New Zealand:South Canterbury/35/2000 H1N1), this protein is Neuraminidase.